Consider the following 279-residue polypeptide: Pantothenate synthetase (279 aa).

26–33 (MGNLHEGH) is an ATP binding site. Residue histidine 33 is the Proton donor of the active site. Position 57 (glutamine 57) interacts with (R)-pantoate. Glutamine 57 is a beta-alanine binding site. 144–147 (GKKD) is an ATP binding site. A (R)-pantoate-binding site is contributed by glutamine 150. ATP-binding positions include valine 173 and 181–184 (LSSR).

It belongs to the pantothenate synthetase family. In terms of assembly, homodimer.

The protein resides in the cytoplasm. It catalyses the reaction (R)-pantoate + beta-alanine + ATP = (R)-pantothenate + AMP + diphosphate + H(+). It functions in the pathway cofactor biosynthesis; (R)-pantothenate biosynthesis; (R)-pantothenate from (R)-pantoate and beta-alanine: step 1/1. Functionally, catalyzes the condensation of pantoate with beta-alanine in an ATP-dependent reaction via a pantoyl-adenylate intermediate. The chain is Pantothenate synthetase from Burkholderia cenocepacia (strain ATCC BAA-245 / DSM 16553 / LMG 16656 / NCTC 13227 / J2315 / CF5610) (Burkholderia cepacia (strain J2315)).